We begin with the raw amino-acid sequence, 1207 residues long: AP-3 complex subunit delta-1 (1207 aa).

The residue at position 2 (A2) is an N-acetylalanine. HEAT repeat units follow at residues 34-71 (KYIS…LGYD), 142-179 (DLAR…KYPE), 180-216 (SLRP…RNPK), 218-254 (YLSL…LEPR), 257-296 (KKLI…GMPN), 298-336 (SASI…THPK), 337-373 (SVQA…KKNL), 375-409 (EIVK…QSNY), and 521-558 (VYVQ…ERLP). 2 disordered regions span residues 630-695 (PLSD…RYQD) and 731-970 (RRHR…EEPL). A phosphoserine mark is found at S632, S634, and S636. The segment covering 648–675 (EEQRHTKPRAPEADEQELARRREARRQE) has biased composition (basic and acidic residues). The stretch at 659-679 (EADEQELARRREARRQEQANN) forms a coiled coil. Position 688 is a phosphoserine (S688). Positions 725–752 (VKLEEERRHRQRLEKDKRKKKKRERERR) form a coiled coil. Residues 731-740 (RRHRQRLEKD) are compositionally biased toward basic and acidic residues. Residues 741-759 (KRKKKKRERERRGTRRHSS) show a composition bias toward basic residues. A phosphoserine mark is found at S758 and S759. A Phosphothreonine modification is found at T762. Residues S764, S788, and S829 each carry the phosphoserine modification. The span at 777 to 794 (VTEEMPENALPSDEDDKD) shows a compositional bias: acidic residues. Over residues 795–840 (PNDPYRALDIDLDKPLADSEKLPVQKHRNAETSKSPEKEDVPLVEK) the composition is skewed to basic and acidic residues. Positions 841–854 (KSKKPKKKEKKHKE) are enriched in basic residues. Positions 846–870 (KKKEKKHKEKEREKKKKEVEKGEDL) form a coiled coil. 2 stretches are compositionally biased toward basic and acidic residues: residues 855–869 (KERE…KGED) and 899–908 (EGQEEPRGEE). Residues 923–933 (PSKHKKKKHKK) show a composition bias toward basic residues. The span at 952–969 (ADEEAAEPVENGTLEEEP) shows a compositional bias: acidic residues.

The protein belongs to the adaptor complexes large subunit family. In terms of assembly, AP-3 associates with the BLOC-1 complex. Adaptor protein complex 3 (AP-3) is a heterotetramer composed of two large adaptins (delta-type subunit AP3D1 and beta-type subunit AP3B1 or AP3B2), a medium adaptin (mu-type subunit AP3M1 or AP3M2) and a small adaptin (sigma-type subunit APS1 or AP3S2). Interacts with SLC30A2. Interacts with CLN3 (via dileucine motif); this interaction facilitates lysosomal targeting.

Its subcellular location is the cytoplasm. The protein localises to the golgi apparatus membrane. Part of the AP-3 complex, an adaptor-related complex which is not clathrin-associated. The complex is associated with the Golgi region as well as more peripheral structures. It facilitates the budding of vesicles from the Golgi membrane and may be directly involved in trafficking to lysosomes. Involved in process of CD8+ T-cell and NK cell degranulation. In concert with the BLOC-1 complex, AP-3 is required to target cargos into vesicles assembled at cell bodies for delivery into neurites and nerve terminals. This Bos taurus (Bovine) protein is AP-3 complex subunit delta-1 (AP3D1).